The primary structure comprises 357 residues: Peptide chain release factor 1 (357 aa).

Position 236 is an N5-methylglutamine (Q236).

It belongs to the prokaryotic/mitochondrial release factor family. Post-translationally, methylated by PrmC. Methylation increases the termination efficiency of RF1.

It localises to the cytoplasm. Functionally, peptide chain release factor 1 directs the termination of translation in response to the peptide chain termination codons UAG and UAA. The chain is Peptide chain release factor 1 (prfA) from Mycobacterium bovis (strain ATCC BAA-935 / AF2122/97).